The sequence spans 145 residues: uncharacterized protein (145 aa).

Residues 62–145 (LPSVGGRMTA…QLPQQGGCPG (84 aa)) form a disordered region. Residues 84-95 (ASSPEDPPLPHP) are compositionally biased toward pro residues.

This is an uncharacterized protein from Homo sapiens (Human).